The chain runs to 83 residues: Type 3 secretion system needle filament protein (83 aa).

The protein belongs to the SctF family. As to quaternary structure, the core secretion machinery of the T3SS is composed of approximately 20 different proteins, including cytoplasmic components, a base, an export apparatus and a needle. This subunit polymerizes and forms the helical needle filament. Interacts with the needle tip protein IpaD/SctA. Interacts with the export apparatus components SpaP/SctR, SpaQ/SctS and SpaR/SctT.

Its subcellular location is the secreted. The protein resides in the cell surface. Its function is as follows. Component of the type III secretion system (T3SS), also called injectisome, which is used to inject bacterial effector proteins into eukaryotic host cells. MxiH/SctF forms the external needle filament that protrudes from the bacterial surface. Functionally, during infection, can induce innate immune responses. The needle proteins interact with host TLR2 or TLR4, and induce signaling by NF-kappa-B and/or AP-1. This activation is MyD88 dependent and results in increased expression of cytokines, including TNF-alpha, IL-6 and IL-8. This is Type 3 secretion system needle filament protein from Shigella flexneri.